The chain runs to 502 residues: ATP synthase subunit alpha (502 aa).

The tract at residues 115–135 (VDGLGPINTTNTRPIESPAPG) is disordered. 169-176 (GDRQTGKT) lines the ATP pocket.

Belongs to the ATPase alpha/beta chains family. As to quaternary structure, F-type ATPases have 2 components, CF(1) - the catalytic core - and CF(0) - the membrane proton channel. CF(1) has five subunits: alpha(3), beta(3), gamma(1), delta(1), epsilon(1). CF(0) has three main subunits: a(1), b(2) and c(9-12). The alpha and beta chains form an alternating ring which encloses part of the gamma chain. CF(1) is attached to CF(0) by a central stalk formed by the gamma and epsilon chains, while a peripheral stalk is formed by the delta and b chains.

The protein localises to the cell membrane. The catalysed reaction is ATP + H2O + 4 H(+)(in) = ADP + phosphate + 5 H(+)(out). Produces ATP from ADP in the presence of a proton gradient across the membrane. The alpha chain is a regulatory subunit. The polypeptide is ATP synthase subunit alpha (Bacillus cereus (strain B4264)).